A 182-amino-acid polypeptide reads, in one-letter code: Ribosome-recycling factor (182 aa).

Residues 136 to 156 (VKKQEKDGDFSEDQSRDEQDS) form a disordered region.

It belongs to the RRF family.

Its subcellular location is the cytoplasm. Functionally, responsible for the release of ribosomes from messenger RNA at the termination of protein biosynthesis. May increase the efficiency of translation by recycling ribosomes from one round of translation to another. This is Ribosome-recycling factor from Synechococcus sp. (strain CC9902).